The primary structure comprises 665 residues: DNA ligase (665 aa).

Residues 31 to 35, 80 to 81, and glutamate 111 contribute to the NAD(+) site; these read DEEFD and SL. Lysine 113 acts as the N6-AMP-lysine intermediate in catalysis. NAD(+) contacts are provided by arginine 134, glutamate 171, lysine 287, and lysine 311. The Zn(2+) site is built by cysteine 405, cysteine 408, cysteine 423, and cysteine 429. A BRCT domain is found at 588–665; sequence FTNHAFQGKI…NEKEFISLCH (78 aa).

The protein belongs to the NAD-dependent DNA ligase family. LigA subfamily. It depends on Mg(2+) as a cofactor. Mn(2+) serves as cofactor.

It catalyses the reaction NAD(+) + (deoxyribonucleotide)n-3'-hydroxyl + 5'-phospho-(deoxyribonucleotide)m = (deoxyribonucleotide)n+m + AMP + beta-nicotinamide D-nucleotide.. DNA ligase that catalyzes the formation of phosphodiester linkages between 5'-phosphoryl and 3'-hydroxyl groups in double-stranded DNA using NAD as a coenzyme and as the energy source for the reaction. It is essential for DNA replication and repair of damaged DNA. This Protochlamydia amoebophila (strain UWE25) protein is DNA ligase.